The primary structure comprises 308 residues: Ectoine dioxygenase (308 aa).

Glutamine 131 contacts L-ectoine. Residue lysine 137 participates in 2-oxoglutarate binding. Fe cation is bound by residues histidine 148, aspartate 150, and histidine 249.

Belongs to the PhyH family. EctD subfamily. In terms of assembly, homodimer. Requires Fe(2+) as cofactor.

The catalysed reaction is L-ectoine + 2-oxoglutarate + O2 = 5-hydroxyectoine + succinate + CO2. In terms of biological role, involved in the biosynthesis of 5-hydroxyectoine, called compatible solute, which helps organisms to survive extreme osmotic stress by acting as a highly soluble organic osmolyte. Catalyzes the 2-oxoglutarate-dependent selective hydroxylation of L-ectoine to yield (4S,5S)-5-hydroxyectoine. The polypeptide is Ectoine dioxygenase (Bordetella parapertussis (strain 12822 / ATCC BAA-587 / NCTC 13253)).